Reading from the N-terminus, the 848-residue chain is Probable disease resistance protein At5g43730 (848 aa).

Residues 25–62 (SNYIHLMESNLDALQKTMEELKNGRDDLLARVSIEEDK) adopt a coiled-coil conformation. Residues 137-439 (VAQKIIPKAE…CEGYINPNRY (303 aa)) enclose the NB-ARC domain. Position 179 to 186 (179 to 186 (GMGGIGKT)) interacts with ATP. LRR repeat units lie at residues 534 to 555 (NLST…FFLF), 558 to 580 (KLVV…ISNL), 582 to 604 (SLQY…KKLR), 605 to 627 (KLIY…ATTL), and 629 to 649 (NLQV…IMEE).

Belongs to the disease resistance NB-LRR family.

Probable disease resistance protein. The polypeptide is Probable disease resistance protein At5g43730 (Arabidopsis thaliana (Mouse-ear cress)).